Reading from the N-terminus, the 1129-residue chain is MKRGEKPEGYRQMRPKTFPASNYPGSSRQMLQEIRESLRNLSKPSDASKAEHNLNKMSTEDPRQVRNPPKFGTHHKALQEIRNSLLPFANETSSSRSPSEVNPQMFQDLQAAGFDEDMVIQALQKTNNRSIEAAVEFISKMSYQDPRREQMSAAAARPINATMKPGNVQHSINRKQSWKGSKESLVPQRHGPSLGENVVYRSESPNSQADVGRPLSGSGIAAFAQAHPSNGQRVNPPPPPQVRSVTPPPPPRGQTPPPRGTTPPPPSWEPSSQTKRYSGNMEYVISRISPVPPGAWQEGYPPPPLTTSPMNPPSQAQRAISSVPVGRQPIIMQSTSKFNFTPGRPGVQNGGGQSDFIVHQNVPTGSVTRQPPPPYPLTPANGQSPSALQTGASAAPPSFANGNVPQSMMVPNRNSHNMELYNINVPGLQTAWPQSSSAPAQSSPSGGHEIPTWQPNIPVRSNSFNNPLGSRASHSANSQPSATTVTAITPAPIQQPVKSMRVLKPELQTALAPTHPSWMPQPVQTVQPTPFSEGTASSVPVIPPVAEAPSYQGPPPPYPKHLLHQNPSVPPYESVSKPCKDEQPSLPKEDDSEKSADSGDSGDKEKKQITTSPITVRKNKKDEERRESRIQSYSPQAFKFFMEQHVENVLKSHQQRLHRKKQLENEMMRVGLSQDAQDQMRKMLCQKESNYIRLKRAKMDKSMFVKIKTLGIGAFGEVCLARKVDTKALYATKTLRKKDVLLRNQVAHVKAERDILAEADNEWVVRLYYSFQDKDNLYFVMDYIPGGDMMSLLIRMGIFPENLARFYIAELTCAVESVHKMGFIHRDIKPDNILIDRDGHIKLTDFGLCTGFRWTHDSKYYQSGDHPRQDSMDFSNEWGDPSNCRCGDRLKPLERRAARQHQRCLAHSLVGTPNYIAPEVLLRTGYTQLCDWWSVGVILFEMLVGQPPFLAQTPLETQMKVINWQTSLHIPPQAKLSPEASDLIIKLCRGPEDRLGKNGADEIKAHPFFKTIDFSSDLRQQSASYIPKITHPTDTSNFDPVDPDKLWSDGSEEENISDTLNGWYKNGKHPEHAFYEFTFRRFFDDNGYPYNYPKPIEYEYIHSQGSEQQSDEDDQHTSSDGNNRDLVYV.

A compositionally biased stretch (basic and acidic residues) spans M1–R11. Positions M1–F71 are disordered. The segment covering P19–M30 has biased composition (polar residues). The span at D46 to Q64 shows a compositional bias: basic and acidic residues. Residues E100–M141 form the UBA domain. 2 disordered regions span residues R148–S216 and P228–R276. The span at N235–W268 shows a compositional bias: pro residues. Position 246 is a phosphothreonine (T246). S278 bears the Phosphoserine mark. 4 disordered regions span residues P292–Q317, P363–S407, W432–P492, and P513–I630. Positions Y300–P312 are enriched in pro residues. The PPxY motif 1 signature appears at P372–Y375. A compositionally biased stretch (polar residues) spans A380–A392. Residues P433–S445 show a composition bias toward low complexity. Residues W453–S481 show a composition bias toward polar residues. S463 bears the Phosphoserine; by NUAK1 and NUAK2 mark. Composition is skewed to low complexity over residues A482–P492 and P520–P530. The segment at T525–Q654 is interaction with YAP1. Positions P555–Y558 match the PPxY motif 2 motif. Positions P578–Q608 are enriched in basic and acidic residues. The residue at position 612 (S612) is a Phosphoserine. Basic and acidic residues predominate over residues K620 to R629. S673 carries the phosphoserine modification. The Protein kinase domain maps to F704–F1009. ATP-binding positions include L710–V718 and K733. D827 serves as the catalytic Proton acceptor. S908 bears the Phosphoserine; by STK3/MST2 mark. The region spanning K1010 to P1089 is the AGC-kinase C-terminal domain. T1078 carries the post-translational modification Phosphothreonine; by STK3/MST2. The segment at Q1104–V1129 is disordered.

The protein belongs to the protein kinase superfamily. AGC Ser/Thr protein kinase family. In terms of assembly, complexes with CDK1 in early mitosis. LATS1-associated CDK1 has no mitotic cyclin partner and no apparent kinase activity. Binds phosphorylated ZYX, locating this protein to the mitotic spindle and suggesting a role for actin regulatory proteins during mitosis. Binds to and colocalizes with LIMK1 at the actomyosin contractile ring during cytokinesis. Interacts (via PPxY motif 2) with YAP1 (via WW domains). Interacts with MOB1A and MOB1B. Interacts with LIMD1, WTIP and AJUBA. Interacts with ESR1, DCAF1 and DCAF13; probably recruits DCAF1 and DCAF13 to ESR1 to promote ESR1 ubiquitination and ubiquitin-mediated proteasomal degradation. Interacts with STK3/MST2; this interaction is inhibited in the presence of DLG5. Interacts with SCRIB in the presence of DLG5. Interacts with WWTR1/TAZ. Interacts with WWC1, WWC2 and WWC3 (via their WW domains). The cofactor is Mg(2+). Post-translationally, autophosphorylated and phosphorylated during M-phase of the cell cycle. Phosphorylated by STK3/MST2 at Ser-908 and Thr-1078, which results in its activation. Phosphorylated by MAP4Ks; in parallel to STK3/MST2 and resulting to its activation. Phosphorylation at Ser-463 by NUAK1 and NUAK2 leads to decreased protein level and is required to regulate cellular senescence and cellular ploidy.

It is found in the cytoplasm. It localises to the cytoskeleton. The protein localises to the microtubule organizing center. Its subcellular location is the centrosome. The protein resides in the spindle. It is found in the midbody. It localises to the spindle pole body. It catalyses the reaction L-seryl-[protein] + ATP = O-phospho-L-seryl-[protein] + ADP + H(+). The enzyme catalyses L-threonyl-[protein] + ATP = O-phospho-L-threonyl-[protein] + ADP + H(+). Its function is as follows. Negative regulator of YAP1 in the Hippo signaling pathway that plays a pivotal role in organ size control and tumor suppression by restricting proliferation and promoting apoptosis. The core of this pathway is composed of a kinase cascade wherein STK3/MST2 and STK4/MST1, in complex with its regulatory protein SAV1, phosphorylates and activates LATS1/2 in complex with its regulatory protein MOB1, which in turn phosphorylates and inactivates YAP1 oncoprotein and WWTR1/TAZ. Phosphorylation of YAP1 by LATS1 inhibits its translocation into the nucleus to regulate cellular genes important for cell proliferation, cell death, and cell migration. Acts as a tumor suppressor which plays a critical role in maintenance of ploidy through its actions in both mitotic progression and the G1 tetraploidy checkpoint. Negatively regulates G2/M transition by down-regulating CDK1 kinase activity. Involved in the control of p53 expression. Affects cytokinesis by regulating actin polymerization through negative modulation of LIMK1. May also play a role in endocrine function. Plays a role in mammary gland epithelial cell differentiation, both through the Hippo signaling pathway and the intracellular estrogen receptor signaling pathway by promoting the degradation of ESR1. Acts as an activator of the NLRP3 inflammasome by mediating phosphorylation of 'Ser-265' of NLRP3 following NLRP3 palmitoylation, promoting NLRP3 activation by NEK7. The protein is Serine/threonine-protein kinase LATS1 of Mus musculus (Mouse).